A 448-amino-acid polypeptide reads, in one-letter code: Glutamyl-tRNA reductase (448 aa).

Substrate is bound by residues Thr49–Arg52, Ser109, Glu114–Gln116, and Gln120. Cys50 serves as the catalytic Nucleophile. Residue Gly189–Ser194 coordinates NADP(+).

It belongs to the glutamyl-tRNA reductase family. Homodimer.

The catalysed reaction is (S)-4-amino-5-oxopentanoate + tRNA(Glu) + NADP(+) = L-glutamyl-tRNA(Glu) + NADPH + H(+). It functions in the pathway porphyrin-containing compound metabolism; protoporphyrin-IX biosynthesis; 5-aminolevulinate from L-glutamyl-tRNA(Glu): step 1/2. Catalyzes the NADPH-dependent reduction of glutamyl-tRNA(Glu) to glutamate 1-semialdehyde (GSA). This chain is Glutamyl-tRNA reductase, found in Staphylococcus aureus (strain NCTC 8325 / PS 47).